Reading from the N-terminus, the 209-residue chain is Small ribosomal subunit protein uS3 (209 aa).

Residues 38-107 (IRKIIKNKYY…RVVINIEEIK (70 aa)) enclose the KH type-2 domain.

It belongs to the universal ribosomal protein uS3 family. Part of the 30S ribosomal subunit. Forms a tight complex with proteins S10 and S14.

Binds the lower part of the 30S subunit head. Binds mRNA in the 70S ribosome, positioning it for translation. The sequence is that of Small ribosomal subunit protein uS3 from Thermotoga maritima (strain ATCC 43589 / DSM 3109 / JCM 10099 / NBRC 100826 / MSB8).